The chain runs to 100 residues: Urease subunit gamma (100 aa).

Belongs to the urease gamma subunit family. In terms of assembly, heterotrimer of UreA (gamma), UreB (beta) and UreC (alpha) subunits. Three heterotrimers associate to form the active enzyme.

It is found in the cytoplasm. It carries out the reaction urea + 2 H2O + H(+) = hydrogencarbonate + 2 NH4(+). Its pathway is nitrogen metabolism; urea degradation; CO(2) and NH(3) from urea (urease route): step 1/1. The polypeptide is Urease subunit gamma (Teredinibacter turnerae (strain ATCC 39867 / T7901)).